Here is a 290-residue protein sequence, read N- to C-terminus: Outer dense fiber protein 4 (290 aa).

Ser-28 bears the Phosphoserine mark. 4 helical membrane-spanning segments follow: residues 44–64 (AQVV…VMVF), 125–145 (PVFG…FVLT), 164–184 (LIGI…LLLF), and 201–221 (IGWS…CGIL). Residues 247–290 (GPESLVSPSQTPSSQENSQESPKDDQKPSSPDKVVSPPQPDTTG) are disordered. Over residues 252-266 (VSPSQTPSSQENSQE) the composition is skewed to polar residues.

Expressed in testis.

It is found in the membrane. Component of the outer dense fibers (ODF) of spermatozoa which could be involved in sperm tail structure, sperm movement and general organization of cellular cytoskeleton. The chain is Outer dense fiber protein 4 (Odf4) from Mus musculus (Mouse).